Reading from the N-terminus, the 382-residue chain is Ribonuclease D (382 aa).

One can recognise a 3'-5' exonuclease domain in the interval 4–169 (ITTTAELASV…DVFAALDADL (166 aa)). Residues 208-289 (KPKDLAVMME…QRGLARDPRE (82 aa)) form the HRDC domain.

It belongs to the RNase D family. A divalent metal cation is required as a cofactor.

The protein localises to the cytoplasm. The catalysed reaction is Exonucleolytic cleavage that removes extra residues from the 3'-terminus of tRNA to produce 5'-mononucleotides.. In terms of biological role, exonuclease involved in the 3' processing of various precursor tRNAs. Initiates hydrolysis at the 3'-terminus of an RNA molecule and releases 5'-mononucleotides. This is Ribonuclease D from Nitrobacter hamburgensis (strain DSM 10229 / NCIMB 13809 / X14).